Here is a 207-residue protein sequence, read N- to C-terminus: Uracil phosphoribosyltransferase (207 aa).

Residues R77, R102, and 129 to 137 (DPMLATGGS) each bind 5-phospho-alpha-D-ribose 1-diphosphate. Uracil contacts are provided by residues I192 and 197 to 199 (GDA). D198 contributes to the 5-phospho-alpha-D-ribose 1-diphosphate binding site.

Belongs to the UPRTase family. Mg(2+) is required as a cofactor.

It carries out the reaction UMP + diphosphate = 5-phospho-alpha-D-ribose 1-diphosphate + uracil. Its pathway is pyrimidine metabolism; UMP biosynthesis via salvage pathway; UMP from uracil: step 1/1. Allosterically activated by GTP. In terms of biological role, catalyzes the conversion of uracil and 5-phospho-alpha-D-ribose 1-diphosphate (PRPP) to UMP and diphosphate. The sequence is that of Uracil phosphoribosyltransferase from Mesoplasma florum (strain ATCC 33453 / NBRC 100688 / NCTC 11704 / L1) (Acholeplasma florum).